A 2475-amino-acid polypeptide reads, in one-letter code: Non-reducing polyketide synthase ausA (2475 aa).

The N-terminal acylcarrier protein transacylase domain (SAT) stretch occupies residues 14 to 253; sequence VLFGSKYSEI…HHADHLSAAQ (240 aa). The Ketosynthase family 3 (KS3) domain maps to 384 to 800; it reads SIPIAVTGLA…GSNAAIVLKE (417 aa). Active-site for beta-ketoacyl synthase activity residues include Cys549, His684, and His723. Residues 910–1212 are malonyl-CoA:ACP transacylase (MAT) domain; it reads LCFGGQTGNK…CPMDLSGPQA (303 aa). The active-site For acyl/malonyl transferase activity is the Ser997. The N-terminal hotdog fold stretch occupies residues 1279-1407; sequence EDLKLVQLLK…GTISLSPGAD (129 aa). In terms of domain architecture, PKS/mFAS DH spans 1279–1586; it reads EDLKLVQLLK…FTSVSIQSLR (308 aa). The segment at 1282–1585 is product template (PT) domain; that stretch reads KLVQLLKNEG…TFTSVSIQSL (304 aa). Residue His1312 is the Proton acceptor; for dehydratase activity of the active site. The C-terminal hotdog fold stretch occupies residues 1435–1586; the sequence is SSSGLKRSTV…FTSVSIQSLR (152 aa). Asp1493 acts as the Proton donor; for dehydratase activity in catalysis. The Carrier domain maps to 1626–1703; the sequence is SSNGDDLRTV…ALVQRIFPGR (78 aa). Position 1663 is an O-(pantetheine 4'-phosphoryl)serine (Ser1663). The methyltransferase (CMeT) domain stretch occupies residues 1865-2098; that stretch reads QHTSEHKLLH…GFNWVDWTDN (234 aa). The thioesterase (TE) domain stretch occupies residues 2127 to 2475; that stretch reads SAIHEETVVY…YEFLRSHVGL (349 aa). Active-site for thioesterase activity residues include Ser2250, Asp2412, and His2444.

It carries out the reaction 3 malonyl-CoA + acetyl-CoA + 2 S-adenosyl-L-methionine = 3,5-dimethylorsellinate + 2 S-adenosyl-L-homocysteine + 3 CO2 + 4 CoA. It functions in the pathway secondary metabolite biosynthesis; terpenoid biosynthesis. Its function is as follows. Non-reducing polyketide synthase; part of the gene cluster A that mediates the biosynthesis of the fungal meroterpenoid acetoxydehydroaustin. The first step of the pathway is the synthesis of 3,5-dimethylorsellinic acid by the polyketide synthase ausA. 3,5-dimethylorsellinic acid is then prenylated by the polyprenyl transferase ausN. Further epoxidation by the FAD-dependent monooxygenase ausM and cyclization by the probable terpene cyclase ausL lead to the formation of protoaustinoid A. Protoaustinoid A is then oxidized to spiro-lactone preaustinoid A3 by the combined action of the FAD-binding monooxygenases ausB and ausC, and the dioxygenase ausE. Acid-catalyzed keto-rearrangement and ring contraction of the tetraketide portion of preaustinoid A3 by ausJ lead to the formation of preaustinoid A4. The aldo-keto reductase ausK, with the help of ausH, is involved in the next step by transforming preaustinoid A4 into isoaustinone which is in turn hydroxylated by the P450 monooxygenase ausI to form austinolide. The cytochrome P450 monooxygenase ausG then modifies austinolide to austinol. Austinol is further acetylated to austin by the O-acetyltransferase ausP, which spontaneously changes to dehydroaustin. The cytochrome P450 monooxygenase then converts dehydroaustin is into 7-dehydrodehydroaustin. The hydroxylation catalyzed by ausR permits the second O-acetyltransferase ausQ to add an additional acetyl group to the molecule, leading to the formation of acetoxydehydroaustin. Due to genetic rearrangements of the clusters and the subsequent loss of some enzymes, the end product of the Penicillium brasilianum austinoid biosynthesis clusters is acetoxydehydroaustin. This is Non-reducing polyketide synthase ausA from Penicillium brasilianum.